A 166-amino-acid polypeptide reads, in one-letter code: HTH-type transcriptional regulator PetP (166 aa).

In terms of domain architecture, HTH marR-type spans 17-152 (DEQLRKGIEA…FRQVLEAMMD (136 aa)). Positions 66–89 (VTTLISVLGVTKQSLNRVLRTLID) form a DNA-binding region, H-T-H motif.

Necessary for photosynthetic and respiratory growth. This Rhodobacter capsulatus (strain ATCC BAA-309 / NBRC 16581 / SB1003) protein is HTH-type transcriptional regulator PetP (petP).